Here is a 106-residue protein sequence, read N- to C-terminus: uncharacterized protein (106 aa).

This is an uncharacterized protein from Haemophilus influenzae (strain ATCC 51907 / DSM 11121 / KW20 / Rd).